The sequence spans 588 residues: Aspartate--tRNA ligase (588 aa).

Glutamate 174 lines the L-aspartate pocket. An aspartate region spans residues 198 to 201 (QLFK). Arginine 220 is an L-aspartate binding site. ATP-binding positions include 220–222 (RDE) and glutamine 229. Histidine 448 provides a ligand contact to L-aspartate. Glutamate 482 is a binding site for ATP. Arginine 489 serves as a coordination point for L-aspartate. An ATP-binding site is contributed by 534 to 537 (GIDR).

Belongs to the class-II aminoacyl-tRNA synthetase family. Type 1 subfamily. Homodimer.

The protein resides in the cytoplasm. The catalysed reaction is tRNA(Asp) + L-aspartate + ATP = L-aspartyl-tRNA(Asp) + AMP + diphosphate. In terms of biological role, catalyzes the attachment of L-aspartate to tRNA(Asp) in a two-step reaction: L-aspartate is first activated by ATP to form Asp-AMP and then transferred to the acceptor end of tRNA(Asp). The polypeptide is Aspartate--tRNA ligase (Xanthomonas oryzae pv. oryzae (strain PXO99A)).